A 231-amino-acid polypeptide reads, in one-letter code: MRLVIARCSVTYEGRLNAHLPTATRLLMVKADGSVLVHSDGGSYKPLNWMSPPATLHVEEPSPDQADQGVTQVWRVQAKKSDDRLIVLIEEVLADDSHELGVDPGLVKDGVEADLQRLLAEQISLLGDGHTLVRREYMTAIGPVDILARDADGGTVAVELKRRGDIDGVEQLTRYLELMNRDPLLAPVRGVFAAQQIKPQARTLAEDRGIRCVTLDYDAMRGVDDAESRLF.

The protein belongs to the NucS endonuclease family.

Its subcellular location is the cytoplasm. In terms of biological role, cleaves both 3' and 5' ssDNA extremities of branched DNA structures. This Micrococcus luteus (strain ATCC 4698 / DSM 20030 / JCM 1464 / CCM 169 / CCUG 5858 / IAM 1056 / NBRC 3333 / NCIMB 9278 / NCTC 2665 / VKM Ac-2230) (Micrococcus lysodeikticus) protein is Endonuclease NucS.